A 412-amino-acid chain; its full sequence is Serine hydroxymethyltransferase (412 aa).

(6S)-5,6,7,8-tetrahydrofolate contacts are provided by residues Leu117 and 121–123 (GHL). Residue Lys226 is modified to N6-(pyridoxal phosphate)lysine.

Belongs to the SHMT family. Homodimer. It depends on pyridoxal 5'-phosphate as a cofactor.

The protein localises to the cytoplasm. The enzyme catalyses (6R)-5,10-methylene-5,6,7,8-tetrahydrofolate + glycine + H2O = (6S)-5,6,7,8-tetrahydrofolate + L-serine. Its pathway is one-carbon metabolism; tetrahydrofolate interconversion. It participates in amino-acid biosynthesis; glycine biosynthesis; glycine from L-serine: step 1/1. Catalyzes the reversible interconversion of serine and glycine with tetrahydrofolate (THF) serving as the one-carbon carrier. This reaction serves as the major source of one-carbon groups required for the biosynthesis of purines, thymidylate, methionine, and other important biomolecules. Also exhibits THF-independent aldolase activity toward beta-hydroxyamino acids, producing glycine and aldehydes, via a retro-aldol mechanism. The polypeptide is Serine hydroxymethyltransferase (Staphylococcus saprophyticus subsp. saprophyticus (strain ATCC 15305 / DSM 20229 / NCIMB 8711 / NCTC 7292 / S-41)).